Here is a 528-residue protein sequence, read N- to C-terminus: Glucans biosynthesis protein G 2 (528 aa).

The signal sequence occupies residues Met1–Gly44.

This sequence belongs to the OpgD/OpgG family.

The protein localises to the periplasm. Its pathway is glycan metabolism; osmoregulated periplasmic glucan (OPG) biosynthesis. Functionally, involved in the biosynthesis of osmoregulated periplasmic glucans (OPGs). The chain is Glucans biosynthesis protein G 2 (opgG2) from Shewanella oneidensis (strain ATCC 700550 / JCM 31522 / CIP 106686 / LMG 19005 / NCIMB 14063 / MR-1).